Here is a 2185-residue protein sequence, read N- to C-terminus: Genome polyprotein (2185 aa).

Residue Gly2 is the site of N-myristoyl glycine; by host attachment. Residues 2 to 1495 (GAQVSTQKTG…HVNRAFICLQ (1494 aa)) lie on the Cytoplasmic side of the membrane. An amphipathic alpha-helix region spans residues 566–582 (FFQGPPGEVVERAIARV). Residues His872 and Asp890 each act as for protease 2A activity in the active site. Zn(2+) is bound by residues Cys907 and Cys909. Catalysis depends on Cys961, which acts as the For protease 2A activity. Zn(2+) contacts are provided by Cys967 and His969. The tract at residues 1101–1173 (NSGWLKKFTE…EQSAPSQSDQ (73 aa)) is membrane-binding. The interval 1101–1239 (NSGWLKKFTE…SPGAGKSVAT (139 aa)) is oligomerization. Residues 1122-1126 (AIKIQ) form an RNA-binding region. Residues 1205-1361 (EKKMSNYIQF…SMYSQNGKIN (157 aa)) enclose the SF3 helicase domain. 3 residues coordinate Zn(2+): Cys1369, Cys1381, and Cys1386. A C4-type; degenerate zinc finger spans residues 1369-1386 (CDEECCPVNFKKCCPLVC). Residues 1413–1420 (EYNHRHSV) are RNA-binding. Positions 1424–1429 (LEALFQ) are oligomerization. An intramembrane segment occupies 1496-1511 (ALTTFVSVAGIIYIIY). The Cytoplasmic segment spans residues 1512-2185 (KLFAGFQGAY…TLRRKWLDSF (674 aa)). Tyr1521 carries the O-(5'-phospho-RNA)-tyrosine modification. A Peptidase C3 domain is found at 1541–1719 (GPAFEFAVAM…FSAALLRHYF (179 aa)). Active-site for protease 3C activity residues include His1580, Glu1611, and Cys1687. The region spanning 1950–2066 (GHLIAFDYSG…SYPWPIDASL (117 aa)) is the RdRp catalytic domain. Positions 1956 and 2052 each coordinate Mg(2+).

The protein belongs to the picornaviruses polyprotein family. As to quaternary structure, interacts with capsid protein VP1 and capsid protein VP3 to form heterotrimeric protomers. In terms of assembly, interacts with capsid protein VP0, and capsid protein VP3 to form heterotrimeric protomers. Five protomers subsequently associate to form pentamers which serve as building blocks for the capsid. Interacts with capsid protein VP2, capsid protein VP3 and capsid protein VP4 following cleavage of capsid protein VP0. Interacts with capsid protein VP1 and capsid protein VP3 in the mature capsid. As to quaternary structure, interacts with capsid protein VP0 and capsid protein VP1 to form heterotrimeric protomers. Five protomers subsequently associate to form pentamers which serve as building blocks for the capsid. Interacts with capsid protein VP4 in the mature capsid. Interacts with protein 2C; this interaction may be important for virion morphogenesis. In terms of assembly, interacts with capsid protein VP1 and capsid protein VP3. Homodimer. As to quaternary structure, homohexamer; forms a hexameric ring structure with 6-fold symmetry characteristic of AAA+ ATPases. Interacts (via N-terminus) with host RTN3 (via reticulon domain); this interaction is important for viral replication. Interacts with capsid protein VP3; this interaction may be important for virion morphogenesis. In terms of assembly, interacts with protein 3CD. Homodimer. Interacts with host GBF1. Interacts (via GOLD domain) with host ACBD3 (via GOLD domain); this interaction allows the formation of a viral protein 3A/ACBD3 heterotetramer with a 2:2 stoichiometry, which will stimulate the recruitment of host PI4KB in order to synthesize PI4P at the viral RNA replication sites. As to quaternary structure, interacts with RNA-directed RNA polymerase. In terms of assembly, interacts with protein 3AB and with RNA-directed RNA polymerase. Interacts with Viral protein genome-linked and with protein 3CD. Mg(2+) is required as a cofactor. In terms of processing, specific enzymatic cleavages in vivo by the viral proteases yield processing intermediates and the mature proteins. Post-translationally, myristoylation is required for the formation of pentamers during virus assembly. Further assembly of 12 pentamers and a molecule of genomic RNA generates the provirion. During virion maturation, immature virions are rendered infectious following cleavage of VP0 into VP4 and VP2. This maturation seems to be an autocatalytic event triggered by the presence of RNA in the capsid and it is followed by a conformational change infectious virion. In terms of processing, myristoylation is required during RNA encapsidation and formation of the mature virus particle. Post-translationally, VPg is uridylylated by the polymerase into VPg-pUpU. This acts as a nucleotide-peptide primer for the genomic RNA replication.

It is found in the virion. The protein resides in the host cytoplasm. Its subcellular location is the host cytoplasmic vesicle membrane. It localises to the host nucleus. The catalysed reaction is a ribonucleoside 5'-triphosphate + H2O = a ribonucleoside 5'-diphosphate + phosphate + H(+). It catalyses the reaction Selective cleavage of Tyr-|-Gly bond in the picornavirus polyprotein.. It carries out the reaction RNA(n) + a ribonucleoside 5'-triphosphate = RNA(n+1) + diphosphate. The enzyme catalyses Selective cleavage of Gln-|-Gly bond in the poliovirus polyprotein. In other picornavirus reactions Glu may be substituted for Gln, and Ser or Thr for Gly.. With respect to regulation, replication or transcription is subject to high level of random mutations by the nucleotide analog ribavirin. Functionally, forms an icosahedral capsid of pseudo T=3 symmetry with capsid proteins VP2 and VP3. The capsid is 300 Angstroms in diameter, composed of 60 copies of each capsid protein and enclosing the viral positive strand RNA genome. Capsid protein VP1 mainly forms the vertices of the capsid. Capsid protein VP1 interacts with host cell receptor to provide virion attachment to target host cells. This attachment induces virion internalization. Tyrosine kinases are probably involved in the entry process. After binding to its receptor, the capsid undergoes conformational changes. Capsid protein VP1 N-terminus (that contains an amphipathic alpha-helix) and capsid protein VP4 are externalized. Together, they shape a pore in the host membrane through which viral genome is translocated to host cell cytoplasm. Its function is as follows. Forms an icosahedral capsid of pseudo T=3 symmetry with capsid proteins VP2 and VP3. The capsid is 300 Angstroms in diameter, composed of 60 copies of each capsid protein and enclosing the viral positive strand RNA genome. Lies on the inner surface of the capsid shell. After binding to the host receptor, the capsid undergoes conformational changes. Capsid protein VP4 is released, Capsid protein VP1 N-terminus is externalized, and together, they shape a pore in the host membrane through which the viral genome is translocated into the host cell cytoplasm. In terms of biological role, component of immature procapsids, which is cleaved into capsid proteins VP4 and VP2 after maturation. Allows the capsid to remain inactive before the maturation step. Functionally, cysteine protease that cleaves viral polyprotein and specific host proteins. It is responsible for the autocatalytic cleavage between the P1 and P2 regions, which is the first cleavage occurring in the polyprotein. Also cleaves the host translation initiation factor EIF4G1, in order to shut down the capped cellular mRNA translation. Inhibits the host nucleus-cytoplasm protein and RNA trafficking by cleaving host members of the nuclear pores. Counteracts stress granule formation probably by antagonizing its assembly or promoting its dissassembly. Its function is as follows. Plays an essential role in the virus replication cycle by acting as a viroporin. Creates a pore in the host endoplasmic reticulum and as a consequence releases Ca2+ in the cytoplasm of infected cell. In turn, high levels of cytoplasmic calcium may trigger membrane trafficking and transport of viral ER-associated proteins to viroplasms, sites of viral genome replication. Induces and associates with structural rearrangements of intracellular membranes. Displays RNA-binding, nucleotide binding and NTPase activities. May play a role in virion morphogenesis and viral RNA encapsidation by interacting with the capsid protein VP3. In terms of biological role, localizes the viral replication complex to the surface of membranous vesicles. Together with protein 3CD binds the Cis-Active RNA Element (CRE) which is involved in RNA synthesis initiation. Acts as a cofactor to stimulate the activity of 3D polymerase, maybe through a nucleid acid chaperone activity. Functionally, localizes the viral replication complex to the surface of membranous vesicles. It inhibits host cell endoplasmic reticulum-to-Golgi apparatus transport and causes the disassembly of the Golgi complex, possibly through GBF1 interaction. This would result in depletion of MHC, trail receptors and IFN receptors at the host cell surface. Plays an essential role in viral RNA replication by recruiting ACBD3 and PI4KB at the viral replication sites, thereby allowing the formation of the rearranged membranous structures where viral replication takes place. Its function is as follows. Acts as a primer for viral RNA replication and remains covalently bound to viral genomic RNA. VPg is uridylylated prior to priming replication into VPg-pUpU. The oriI viral genomic sequence may act as a template for this. The VPg-pUpU is then used as primer on the genomic RNA poly(A) by the RNA-dependent RNA polymerase to replicate the viral genome. During genome replication, the VPg-RNA linkage is removed by the host TDP2, thereby accelerating replication. During the late stage of the replication cycle, host TDP2 is excluded from sites of viral RNA synthesis and encapsidation, allowing for the generation of progeny virions. Involved in the viral replication complex and viral polypeptide maturation. It exhibits protease activity with a specificity and catalytic efficiency that is different from protease 3C. Protein 3CD lacks polymerase activity. Protein 3CD binds to the 5'UTR of the viral genome. In terms of biological role, major viral protease that mediates proteolytic processing of the polyprotein. Cleaves host EIF5B, contributing to host translation shutoff. Also cleaves host PABPC1, contributing to host translation shutoff. Cleaves host NLRP1, triggers host N-glycine-mediated degradation of the autoinhibitory NLRP1 N-terminal fragment. Functionally, replicates the viral genomic RNA on the surface of intracellular membranes. May form linear arrays of subunits that propagate along a strong head-to-tail interaction called interface-I. Covalently attaches UMP to a tyrosine of VPg, which is used to prime RNA synthesis. The positive stranded RNA genome is first replicated at virus induced membranous vesicles, creating a dsRNA genomic replication form. This dsRNA is then used as template to synthesize positive stranded RNA genomes. ss(+)RNA genomes are either translated, replicated or encapsidated. The polypeptide is Genome polyprotein (Swine vesicular disease virus (strain H/3 '76) (SVDV)).